The primary structure comprises 170 residues: Large ribosomal subunit protein uL10 (170 aa).

It belongs to the universal ribosomal protein uL10 family. In terms of assembly, part of the ribosomal stalk of the 50S ribosomal subunit. The N-terminus interacts with L11 and the large rRNA to form the base of the stalk. The C-terminus forms an elongated spine to which L12 dimers bind in a sequential fashion forming a multimeric L10(L12)X complex.

Its function is as follows. Forms part of the ribosomal stalk, playing a central role in the interaction of the ribosome with GTP-bound translation factors. This is Large ribosomal subunit protein uL10 from Lactobacillus acidophilus (strain ATCC 700396 / NCK56 / N2 / NCFM).